A 392-amino-acid polypeptide reads, in one-letter code: RNA-binding protein 42 (392 aa).

Positions 293-371 (FRIFCGDLGN…RPIKLRKSQW (79 aa)) constitute an RRM domain. The interval 372–392 (KDRNMDVVRKKQREKKKLGLR) is disordered. A compositionally biased stretch (basic residues) spans 381 to 392 (KKQREKKKLGLR).

The protein belongs to the RRM RBM42 family.

It localises to the nucleus. The protein resides in the cytoplasm. Functionally, may bind RNA. The protein is RNA-binding protein 42 (rbm42) of Xenopus tropicalis (Western clawed frog).